We begin with the raw amino-acid sequence, 157 residues long: Ribosome maturation factor RimM (157 aa).

A PRC barrel domain is found at 89–156 (PGEYYHVDLI…DRLLIDPEFV (68 aa)).

This sequence belongs to the RimM family. In terms of assembly, binds ribosomal protein uS19.

It localises to the cytoplasm. Functionally, an accessory protein needed during the final step in the assembly of 30S ribosomal subunit, possibly for assembly of the head region. Essential for efficient processing of 16S rRNA. May be needed both before and after RbfA during the maturation of 16S rRNA. It has affinity for free ribosomal 30S subunits but not for 70S ribosomes. This chain is Ribosome maturation factor RimM, found in Rhizorhabdus wittichii (strain DSM 6014 / CCUG 31198 / JCM 15750 / NBRC 105917 / EY 4224 / RW1) (Sphingomonas wittichii).